A 525-amino-acid polypeptide reads, in one-letter code: Serine protease 1 (525 aa).

The first 32 residues, 1 to 32, serve as a signal peptide directing secretion; that stretch reads MKCKKPSALFSALALVGALGAASVLGAASANS. A propeptide spanning residues 33 to 211 is cleaved from the precursor; sequence ASPVAAATVQ…TVSDDVIVPV (179 aa). The cysteines at positions 223 and 239 are disulfide-linked. Residues His-238 and Asp-270 each act as charge relay system in the active site. 5 disulfides stabilise this stretch: Cys-310–Cys-320, Cys-346–Cys-376, Cys-412–Cys-431, Cys-453–Cys-472, and Cys-496–Cys-514. Ser-352 (charge relay system) is an active-site residue. The 130-residue stretch at 396-525 folds into the Ricin B-type lectin domain; it reads TSTDVTTSYV…GGANQKWWRR (130 aa). The tract at residues 401 to 525 is essential for the lytic activity, but not for protease function; that stretch reads TTSYVQGYQN…GGANQKWWRR (125 aa).

This sequence belongs to the peptidase S1 family.

The protein resides in the secreted. Functionally, major serine protease exhibiting lytic activity toward living yeast cells. Similar to elastase in its substrate specificity and has a lectin-like affinity for mannose. Mannoproteins may be the native substrate for RPI. In Rarobacter faecitabidus, this protein is Serine protease 1.